We begin with the raw amino-acid sequence, 280 residues long: Nocamycin O-methyltransferase (280 aa).

This sequence belongs to the methyltransferase superfamily.

It catalyses the reaction nocamycin E + S-adenosyl-L-methionine = nocamycin I + S-adenosyl-L-homocysteine. It participates in antibiotic biosynthesis. Functionally, involved in the biosynthesis of nocamycin I and nocamycin II. Catalyzes the methylation of nocamycin E to yield nocamycin I. This Saccharothrix syringae (Nocardiopsis syringae) protein is Nocamycin O-methyltransferase.